A 435-amino-acid chain; its full sequence is Histidinol dehydrogenase (435 aa).

NAD(+) contacts are provided by Y131, Q189, and N212. Substrate contacts are provided by S238, Q260, and H263. Residues Q260 and H263 each coordinate Zn(2+). Active-site proton acceptor residues include E327 and H328. Positions 328, 361, 415, and 420 each coordinate substrate. Position 361 (D361) interacts with Zn(2+). Residue H420 coordinates Zn(2+).

Belongs to the histidinol dehydrogenase family. In terms of assembly, homodimer. The cofactor is Zn(2+).

It carries out the reaction L-histidinol + 2 NAD(+) + H2O = L-histidine + 2 NADH + 3 H(+). Its pathway is amino-acid biosynthesis; L-histidine biosynthesis; L-histidine from 5-phospho-alpha-D-ribose 1-diphosphate: step 9/9. Catalyzes the sequential NAD-dependent oxidations of L-histidinol to L-histidinaldehyde and then to L-histidine. The chain is Histidinol dehydrogenase (hisD) from Buchnera aphidicola subsp. Acyrthosiphon pisum (strain APS) (Acyrthosiphon pisum symbiotic bacterium).